The chain runs to 157 residues: Nascent polypeptide-associated complex subunit beta (157 aa).

A disordered region spans residues 1–28 (MPVDPEKLAKLQKSSAKKVGGSRVKAKK). The 66-residue stretch at 33–98 (EQDDTKLIEA…PQEKNITQLI (66 aa)) folds into the NAC-A/B domain. Residues 124–157 (KTPKDFNTGSANAAADAGGEDIPDLVDQKFDDVE) are disordered.

It belongs to the NAC-beta family. In terms of assembly, part of the nascent polypeptide-associated complex (NAC), consisting of EGD2 and EGD1. NAC associates with ribosomes via EGD1.

The protein resides in the cytoplasm. The protein localises to the nucleus. Its function is as follows. Component of the nascent polypeptide-associated complex (NAC), a dynamic component of the ribosomal exit tunnel, protecting the emerging polypeptides from interaction with other cytoplasmic proteins to ensure appropriate nascent protein targeting. The NAC complex also promotes mitochondrial protein import by enhancing productive ribosome interactions with the outer mitochondrial membrane and blocks the inappropriate interaction of ribosomes translating non-secretory nascent polypeptides with translocation sites in the membrane of the endoplasmic reticulum. EGD1 may act as a transcription factor that exert a negative effect on the expression of several genes that are transcribed by RNA polymerase II. This Candida albicans (strain SC5314 / ATCC MYA-2876) (Yeast) protein is Nascent polypeptide-associated complex subunit beta (EGD1).